Reading from the N-terminus, the 407-residue chain is Phosphopentomutase (407 aa).

Asp10, Asp306, His311, Asp347, His348, and His359 together coordinate Mn(2+).

Belongs to the phosphopentomutase family. Requires Mn(2+) as cofactor.

It is found in the cytoplasm. The catalysed reaction is 2-deoxy-alpha-D-ribose 1-phosphate = 2-deoxy-D-ribose 5-phosphate. It catalyses the reaction alpha-D-ribose 1-phosphate = D-ribose 5-phosphate. It participates in carbohydrate degradation; 2-deoxy-D-ribose 1-phosphate degradation; D-glyceraldehyde 3-phosphate and acetaldehyde from 2-deoxy-alpha-D-ribose 1-phosphate: step 1/2. Isomerase that catalyzes the conversion of deoxy-ribose 1-phosphate (dRib-1-P) and ribose 1-phosphate (Rib-1-P) to deoxy-ribose 5-phosphate (dRib-5-P) and ribose 5-phosphate (Rib-5-P), respectively. The sequence is that of Phosphopentomutase from Yersinia enterocolitica serotype O:8 / biotype 1B (strain NCTC 13174 / 8081).